Here is a 161-residue protein sequence, read N- to C-terminus: GTP-dependent dephospho-CoA kinase (161 aa).

The GTP site is built by aspartate 37, isoleucine 38, aspartate 56, lysine 58, glutamate 112, and aspartate 135.

This sequence belongs to the GTP-dependent DPCK family.

It carries out the reaction 3'-dephospho-CoA + GTP = GDP + CoA + H(+). It functions in the pathway cofactor biosynthesis; coenzyme A biosynthesis. Functionally, catalyzes the GTP-dependent phosphorylation of the 3'-hydroxyl group of dephosphocoenzyme A to form coenzyme A (CoA). In Methanococcus aeolicus (strain ATCC BAA-1280 / DSM 17508 / OCM 812 / Nankai-3), this protein is GTP-dependent dephospho-CoA kinase.